The primary structure comprises 359 residues: Type-1 angiotensin II receptor (359 aa).

The Extracellular portion of the chain corresponds to 1–25 (MMLNSSTEDGIKRIQDDCPKAGRHN). N-linked (GlcNAc...) asparagine glycosylation occurs at Asn-4. Angiotensin II-binding residues include Gln-15 and Asp-17. 2 cysteine pairs are disulfide-bonded: Cys-18-Cys-274 and Cys-101-Cys-180. A helical membrane pass occupies residues 26-55 (YIFVMIPTLYSIIFVVGIFGNSLAVIVIYF). The Cytoplasmic segment spans residues 56–61 (YMKLKT). The chain crosses the membrane as a helical span at residues 62–89 (VASVFLLNLALADLCFLLTLPLWAVYTA). Over 90–98 (MEYRWPFGN) the chain is Extracellular. Residues 99 to 125 (YLCKIASASVSFNLYASVFLLTCLSID) traverse the membrane as a helical segment. Topologically, residues 126 to 141 (RYLAIVHPMKSRLRRT) are cytoplasmic. The helical transmembrane segment at 142-165 (MLVAKVTCIIIWLLAGLASLPAII) threads the bilayer. The Extracellular segment spans residues 166-190 (HRNVFFIENTNITVCAFHYESQNST). Residue Arg-167 coordinates angiotensin II. A glycan (N-linked (GlcNAc...) asparagine) is linked at Asn-176. Phe-182, His-183, and Tyr-184 together coordinate angiotensin II. The N-linked (GlcNAc...) asparagine glycan is linked to Asn-188. The helical transmembrane segment at 191–216 (LPIGLGLTKNILGFLFPFLIILTSYT) threads the bilayer. Residue Lys-199 coordinates angiotensin II. Over 217–239 (LIWKALKKAYEIQKNKPRNDDIF) the chain is Cytoplasmic. A helical membrane pass occupies residues 240–268 (KIIMAIVLFFFFSWVPHQIFTFLDVLIQL). Over 269–278 (GVIHDCRIAD) the chain is Extracellular. A helical transmembrane segment spans residues 279–304 (IVDTAMPITICIAYFNNCLNPLFYGF). The Cytoplasmic portion of the chain corresponds to 305–359 (LGKKFKKYFLQLLKYIPPKAKSHSNLSTKMSTLSYRPSDNVSSSSKKPVPCFEVE). Positions 335 to 350 (STLSYRPSDNVSSSSK) are enriched in polar residues. The interval 335–359 (STLSYRPSDNVSSSSKKPVPCFEVE) is disordered. Residue Cys-355 is the site of S-palmitoyl cysteine attachment.

It belongs to the G-protein coupled receptor 1 family. As to quaternary structure, interacts with MAS1. Interacts with ARRB1. Interacts with FLNA (via filamin repeat 21); increases PKA-mediated phosphorylation of FLNA. C-terminal Ser or Thr residues may be phosphorylated.

Its subcellular location is the cell membrane. In terms of biological role, receptor for angiotensin II, a vasoconstricting peptide, which acts as a key regulator of blood pressure and sodium retention by the kidney. The activated receptor in turn couples to G-alpha proteins G(q) (GNAQ, GNA11, GNA14 or GNA15) and thus activates phospholipase C and increases the cytosolic Ca(2+) concentrations, which in turn triggers cellular responses such as stimulation of protein kinase C. This is Type-1 angiotensin II receptor (AGTR1) from Oryctolagus cuniculus (Rabbit).